We begin with the raw amino-acid sequence, 365 residues long: Protein-glutamate methylesterase/protein-glutamine glutaminase (365 aa).

The Response regulatory domain maps to 5-122 (KVLIVDDSAF…SLDIRKIGEK (118 aa)). D56 carries the 4-aspartylphosphate modification. Basic and acidic residues predominate over residues 146–155 (IKKEKQDESS). Residues 146–167 (IKKEKQDESSTPKPQVEKTSGL) are disordered. Residues 156 to 167 (TPKPQVEKTSGL) show a composition bias toward polar residues. The CheB-type methylesterase domain maps to 177–363 (ILIGSSTGGP…LEIIKFAKKI (187 aa)). Residues S182, H208, and D305 contribute to the active site.

It belongs to the CheB family. In terms of processing, phosphorylated by CheA. Phosphorylation of the N-terminal regulatory domain activates the methylesterase activity.

It is found in the cytoplasm. The enzyme catalyses [protein]-L-glutamate 5-O-methyl ester + H2O = L-glutamyl-[protein] + methanol + H(+). It carries out the reaction L-glutaminyl-[protein] + H2O = L-glutamyl-[protein] + NH4(+). Functionally, involved in chemotaxis. Part of a chemotaxis signal transduction system that modulates chemotaxis in response to various stimuli. Catalyzes the demethylation of specific methylglutamate residues introduced into the chemoreceptors (methyl-accepting chemotaxis proteins or MCP) by CheR. Also mediates the irreversible deamidation of specific glutamine residues to glutamic acid. This chain is Protein-glutamate methylesterase/protein-glutamine glutaminase, found in Methanococcus maripaludis (strain DSM 14266 / JCM 13030 / NBRC 101832 / S2 / LL).